A 99-amino-acid polypeptide reads, in one-letter code: Accessory protein p12I (99 aa).

A helical membrane pass occupies residues 3-23 (FRLLSPLSPLALTALLLFLLP). 2 short sequence motifs (SH3-binding) span residues 4–11 (RLLSPLSP) and 33–38 (RPPPAP). The helical transmembrane segment at 48–68 (ILSGLLFLLFLPLFFSLPLLL) threads the bilayer. 2 consecutive short sequence motifs (SH3-binding) follow at residues 70–77 (PSLPITMR) and 88–93 (KAPSQP). A Glycyl lysine isopeptide (Lys-Gly) (interchain with G-Cter in ubiquitin); in isolate LAF cross-link involves residue lysine 88.

The protein belongs to the HTLV-1 accessory protein p12I family. P12I is a homodimer. Interacts with human CANX, CALR, ATP6V0C, IL2RB, IL2RG. Binds to MHC-I heavy chains HLA-A2, HLA-B7 and HLA-Cw4. Post-translationally, ubiquitinated; a fraction of P12I is degraded via the ubiquitin system.

The protein resides in the host endoplasmic reticulum membrane. Its subcellular location is the host Golgi apparatus. It is found in the host cis-Golgi network membrane. Its function is as follows. p12I is a modulator of T-lymphocyte proliferation and immune function and may contribute to establish a persistent infection. Binds and down-modulates cell surface expression of interleukin-2 receptors IL2RB and IL2RG. Also down-modulates cell surface MHC-I molecules by binding to free immature MHC-I heavy chains in the ER and targeting them to the proteasome for degradation. Binding to IL2RB mediates recruitment of JAK1 and JAK3. As a result of this interaction, p12I increases DNA-binding and transcriptional activity of STAT5. This Homo sapiens (Human) protein is Accessory protein p12I.